A 93-amino-acid polypeptide reads, in one-letter code: UPF0358 protein lmo1070 (93 aa).

This sequence belongs to the UPF0358 family.

This chain is UPF0358 protein lmo1070, found in Listeria monocytogenes serovar 1/2a (strain ATCC BAA-679 / EGD-e).